We begin with the raw amino-acid sequence, 350 residues long: Arabinogalactan endo-beta-1,4-galactanase A (350 aa).

A signal peptide spans 1–17; sequence MILSSLLPLSLVTLTSA. An N-linked (GlcNAc...) asparagine glycan is attached at asparagine 129. Glutamate 153 functions as the Proton donor in the catalytic mechanism. Glutamate 263 (nucleophile) is an active-site residue.

The protein belongs to the glycosyl hydrolase 53 family.

Its subcellular location is the secreted. It catalyses the reaction The enzyme specifically hydrolyzes (1-&gt;4)-beta-D-galactosidic linkages in type I arabinogalactans.. Endogalactanase involved in the degradation of plant cell wall polysaccharides, and more particularly of hairy regions of pectin. The protein is Arabinogalactan endo-beta-1,4-galactanase A (galA) of Emericella nidulans (strain FGSC A4 / ATCC 38163 / CBS 112.46 / NRRL 194 / M139) (Aspergillus nidulans).